The primary structure comprises 469 residues: Sorting and assembly machinery component 50 homolog (469 aa).

In terms of domain architecture, POTRA spans 45–125 (VVVQHVHFDG…LDVTFEVTEL (81 aa)). N6-methyllysine is present on K255.

It belongs to the SAM50/omp85 family. Associates with the mitochondrial contact site and cristae organizing system (MICOS) complex, composed of at least MICOS10/MIC10, CHCHD3/MIC19, CHCHD6/MIC25, APOOL/MIC27, IMMT/MIC60, APOO/MIC23/MIC26 and QIL1/MIC13. This complex was also known under the names MINOS or MitOS complex. The MICOS complex associates with mitochondrial outer membrane proteins SAMM50, MTX1 and MTX2 (together described as components of the mitochondrial outer membrane sorting assembly machinery (SAM) complex) and DNAJC11, mitochondrial inner membrane protein TMEM11 and with HSPA9. The MICOS and SAM complexes together with DNAJC11 are part of a large protein complex spanning both membranes termed the mitochondrial intermembrane space bridging (MIB) complex. Interacts with IMMT/MIC60. Interacts with CHCHD3/MIC19. Interacts with ARMC1.

It localises to the mitochondrion outer membrane. The protein localises to the cytoplasm. The protein resides in the mitochondrion. Plays a crucial role in the maintenance of the structure of mitochondrial cristae and the proper assembly of the mitochondrial respiratory chain complexes. Required for the assembly of TOMM40 into the TOM complex. This is Sorting and assembly machinery component 50 homolog (SAMM50) from Bos taurus (Bovine).